We begin with the raw amino-acid sequence, 2038 residues long: Fer-1-like protein 5 (2038 aa).

7 consecutive C2 domains span residues 1–100 (MLRV…MFVR), 145–265 (TQKK…TLLR), 307–424 (QNTR…QGMY), 1055–1186 (TPED…FTPL), 1225–1345 (IPCK…SLNY), 1467–1587 (PKPP…ARCG), and 1705–1853 (GPPG…KQCS). Aspartate 1502, aspartate 1508, aspartate 1557, phenylalanine 1558, aspartate 1559, aspartate 1565, aspartate 1824, serine 1827, and aspartate 1830 together coordinate Ca(2+). The chain crosses the membrane as a helical span at residues 1961-1981 (IICLVVTLVIGFILLNFVYSA).

It belongs to the ferlin family. In terms of assembly, interacts (via second C2 domain) with EHD1 and EHD2. Ca(2+) is required as a cofactor. Expressed in differentiating myoblasts and myotubes.

The protein localises to the cell membrane. It is found in the membrane. In terms of biological role, plays a role in myoblast fusion; probable mediator of endocytic recycling for membrane trafficking events during myotube formation. This Mus musculus (Mouse) protein is Fer-1-like protein 5 (Fer1l5).